Consider the following 101-residue polypeptide: Small ribosomal subunit protein uS14 (101 aa).

Belongs to the universal ribosomal protein uS14 family. In terms of assembly, part of the 30S ribosomal subunit. Contacts proteins S3 and S10.

Its function is as follows. Binds 16S rRNA, required for the assembly of 30S particles and may also be responsible for determining the conformation of the 16S rRNA at the A site. The polypeptide is Small ribosomal subunit protein uS14 (Rhizobium etli (strain CIAT 652)).